A 184-amino-acid polypeptide reads, in one-letter code: Shikimate kinase (184 aa).

Residue 18 to 23 (GAGKTT) coordinates ATP. Thr-22 is a Mg(2+) binding site. Substrate is bound by residues Asp-40, Arg-64, and Gly-86. Arg-124 serves as a coordination point for ATP. Arg-143 contacts substrate. Gln-160 lines the ATP pocket.

Belongs to the shikimate kinase family. As to quaternary structure, monomer. Mg(2+) serves as cofactor.

Its subcellular location is the cytoplasm. The enzyme catalyses shikimate + ATP = 3-phosphoshikimate + ADP + H(+). It functions in the pathway metabolic intermediate biosynthesis; chorismate biosynthesis; chorismate from D-erythrose 4-phosphate and phosphoenolpyruvate: step 5/7. In terms of biological role, catalyzes the specific phosphorylation of the 3-hydroxyl group of shikimic acid using ATP as a cosubstrate. This chain is Shikimate kinase, found in Chromobacterium violaceum (strain ATCC 12472 / DSM 30191 / JCM 1249 / CCUG 213 / NBRC 12614 / NCIMB 9131 / NCTC 9757 / MK).